The sequence spans 459 residues: Inositol-trisphosphate 3-kinase A (459 aa).

The interval 1–26 (MTLPGHPTGMARPRGAGPCSPGLERA) is disordered. Residues arginine 35, arginine 55, and arginine 62 each carry the omega-N-methylarginine modification. The segment at 49-164 (AAAGEPRARG…TSEDVGQKSH (116 aa)) is disordered. A compositionally biased stretch (low complexity) spans 116–132 (RRLSTSSLSSTGSSSLL). Serine 135 and serine 195 each carry phosphoserine. ATP is bound by residues serine 195, lysine 207, 247–249 (QDL), and aspartate 260. Substrate contacts are provided by lysine 262 and arginine 283. The segment at 285-293 (DMYKKMLAV) is calmodulin-binding. 310 to 317 (KPRYMQWR) contributes to the substrate binding site. Lysine 334 and aspartate 414 together coordinate ATP. Substrate is bound at residue lysine 417.

It belongs to the inositol phosphokinase (IPK) family.

It localises to the cytoplasm. It is found in the cytoskeleton. The catalysed reaction is 1D-myo-inositol 1,4,5-trisphosphate + ATP = 1D-myo-inositol 1,3,4,5-tetrakisphosphate + ADP + H(+). With respect to regulation, activated by calcium/calmodulin. Catalyzes the phosphorylation of 1D-myo-inositol 1,4,5-trisphosphate (InsP3) into 1D-myo-inositol 1,3,4,5-tetrakisphosphate and participates to the regulation of calcium homeostasis. This chain is Inositol-trisphosphate 3-kinase A, found in Rattus norvegicus (Rat).